We begin with the raw amino-acid sequence, 267 residues long: Endonuclease NucS (267 aa).

It belongs to the NucS endonuclease family.

Its subcellular location is the cytoplasm. Functionally, cleaves both 3' and 5' ssDNA extremities of branched DNA structures. The chain is Endonuclease NucS from Pyrococcus furiosus (strain ATCC 43587 / DSM 3638 / JCM 8422 / Vc1).